We begin with the raw amino-acid sequence, 377 residues long: Lipoyl synthase, mitochondrial (377 aa).

Cys98, Cys103, Cys109, Cys128, Cys132, Cys135, and Ser343 together coordinate [4Fe-4S] cluster. Positions 113–332 (KKSEATATIM…RDTALDMGFL (220 aa)) constitute a Radical SAM core domain.

This sequence belongs to the radical SAM superfamily. Lipoyl synthase family. Requires [4Fe-4S] cluster as cofactor.

The protein resides in the mitochondrion. It catalyses the reaction [[Fe-S] cluster scaffold protein carrying a second [4Fe-4S](2+) cluster] + N(6)-octanoyl-L-lysyl-[protein] + 2 oxidized [2Fe-2S]-[ferredoxin] + 2 S-adenosyl-L-methionine + 4 H(+) = [[Fe-S] cluster scaffold protein] + N(6)-[(R)-dihydrolipoyl]-L-lysyl-[protein] + 4 Fe(3+) + 2 hydrogen sulfide + 2 5'-deoxyadenosine + 2 L-methionine + 2 reduced [2Fe-2S]-[ferredoxin]. It functions in the pathway protein modification; protein lipoylation via endogenous pathway; protein N(6)-(lipoyl)lysine from octanoyl-[acyl-carrier-protein]: step 2/2. Functionally, catalyzes the radical-mediated insertion of two sulfur atoms into the C-6 and C-8 positions of the octanoyl moiety bound to the lipoyl domains of lipoate-dependent enzymes, thereby converting the octanoylated domains into lipoylated derivatives. The sequence is that of Lipoyl synthase, mitochondrial from Candida tropicalis (strain ATCC MYA-3404 / T1) (Yeast).